A 166-amino-acid chain; its full sequence is Regulatory protein RecX (166 aa).

Belongs to the RecX family.

Its subcellular location is the cytoplasm. In terms of biological role, modulates RecA activity. This Shigella boydii serotype 4 (strain Sb227) protein is Regulatory protein RecX.